Consider the following 347-residue polypeptide: S-adenosylmethionine:tRNA ribosyltransferase-isomerase (347 aa).

It belongs to the QueA family. Monomer.

It is found in the cytoplasm. The enzyme catalyses 7-aminomethyl-7-carbaguanosine(34) in tRNA + S-adenosyl-L-methionine = epoxyqueuosine(34) in tRNA + adenine + L-methionine + 2 H(+). Its pathway is tRNA modification; tRNA-queuosine biosynthesis. Functionally, transfers and isomerizes the ribose moiety from AdoMet to the 7-aminomethyl group of 7-deazaguanine (preQ1-tRNA) to give epoxyqueuosine (oQ-tRNA). This Treponema denticola (strain ATCC 35405 / DSM 14222 / CIP 103919 / JCM 8153 / KCTC 15104) protein is S-adenosylmethionine:tRNA ribosyltransferase-isomerase.